Here is a 500-residue protein sequence, read N- to C-terminus: Probable malate:quinone oxidoreductase (500 aa).

The protein belongs to the MQO family. Requires FAD as cofactor.

The catalysed reaction is (S)-malate + a quinone = a quinol + oxaloacetate. Its pathway is carbohydrate metabolism; tricarboxylic acid cycle; oxaloacetate from (S)-malate (quinone route): step 1/1. The sequence is that of Probable malate:quinone oxidoreductase from Bacillus mycoides (strain KBAB4) (Bacillus weihenstephanensis).